The chain runs to 182 residues: ATP synthase subunit delta (182 aa).

The protein belongs to the ATPase delta chain family. In terms of assembly, F-type ATPases have 2 components, F(1) - the catalytic core - and F(0) - the membrane proton channel. F(1) has five subunits: alpha(3), beta(3), gamma(1), delta(1), epsilon(1). F(0) has three main subunits: a(1), b(2) and c(10-14). The alpha and beta chains form an alternating ring which encloses part of the gamma chain. F(1) is attached to F(0) by a central stalk formed by the gamma and epsilon chains, while a peripheral stalk is formed by the delta and b chains.

The protein localises to the cell inner membrane. In terms of biological role, f(1)F(0) ATP synthase produces ATP from ADP in the presence of a proton or sodium gradient. F-type ATPases consist of two structural domains, F(1) containing the extramembraneous catalytic core and F(0) containing the membrane proton channel, linked together by a central stalk and a peripheral stalk. During catalysis, ATP synthesis in the catalytic domain of F(1) is coupled via a rotary mechanism of the central stalk subunits to proton translocation. Its function is as follows. This protein is part of the stalk that links CF(0) to CF(1). It either transmits conformational changes from CF(0) to CF(1) or is implicated in proton conduction. The chain is ATP synthase subunit delta from Histophilus somni (strain 2336) (Haemophilus somnus).